The chain runs to 738 residues: Phosphoribosylformylglycinamidine synthase subunit PurL (738 aa).

Residue His-41 is part of the active site. Positions 44 and 83 each coordinate ATP. Glu-85 contacts Mg(2+). Substrate contacts are provided by residues 86 to 89 and Arg-108; that span reads SHNH. Catalysis depends on His-87, which acts as the Proton acceptor. Residue Asp-109 participates in Mg(2+) binding. Gln-233 provides a ligand contact to substrate. Asp-261 contacts Mg(2+). Position 305–307 (305–307) interacts with substrate; sequence ESQ. Residues Asp-490 and Gly-527 each coordinate ATP. Asn-528 serves as a coordination point for Mg(2+). Ser-530 lines the substrate pocket.

It belongs to the FGAMS family. As to quaternary structure, monomer. Part of the FGAM synthase complex composed of 1 PurL, 1 PurQ and 2 PurS subunits.

Its subcellular location is the cytoplasm. It carries out the reaction N(2)-formyl-N(1)-(5-phospho-beta-D-ribosyl)glycinamide + L-glutamine + ATP + H2O = 2-formamido-N(1)-(5-O-phospho-beta-D-ribosyl)acetamidine + L-glutamate + ADP + phosphate + H(+). It functions in the pathway purine metabolism; IMP biosynthesis via de novo pathway; 5-amino-1-(5-phospho-D-ribosyl)imidazole from N(2)-formyl-N(1)-(5-phospho-D-ribosyl)glycinamide: step 1/2. Functionally, part of the phosphoribosylformylglycinamidine synthase complex involved in the purines biosynthetic pathway. Catalyzes the ATP-dependent conversion of formylglycinamide ribonucleotide (FGAR) and glutamine to yield formylglycinamidine ribonucleotide (FGAM) and glutamate. The FGAM synthase complex is composed of three subunits. PurQ produces an ammonia molecule by converting glutamine to glutamate. PurL transfers the ammonia molecule to FGAR to form FGAM in an ATP-dependent manner. PurS interacts with PurQ and PurL and is thought to assist in the transfer of the ammonia molecule from PurQ to PurL. In Alkaliphilus metalliredigens (strain QYMF), this protein is Phosphoribosylformylglycinamidine synthase subunit PurL.